Consider the following 262-residue polypeptide: Putative ankyrin repeat protein FPV243 (262 aa).

Residues Tyr25 to Glu54 form an ANK repeat.

This chain is Putative ankyrin repeat protein FPV243, found in Vertebrata (FPV).